Reading from the N-terminus, the 352-residue chain is Peptide chain release factor 1 (352 aa).

Residue Q229 is modified to N5-methylglutamine.

Belongs to the prokaryotic/mitochondrial release factor family. In terms of processing, methylated by PrmC. Methylation increases the termination efficiency of RF1.

The protein resides in the cytoplasm. In terms of biological role, peptide chain release factor 1 directs the termination of translation in response to the peptide chain termination codons UAG and UAA. In Granulibacter bethesdensis (strain ATCC BAA-1260 / CGDNIH1), this protein is Peptide chain release factor 1.